Consider the following 210-residue polypeptide: Peptidyl-tRNA hydrolase (210 aa).

Tyr14 serves as a coordination point for tRNA. Residue His19 is the Proton acceptor of the active site. TRNA is bound by residues Phe64, Asn66, and Asn112.

This sequence belongs to the PTH family. Monomer.

It is found in the cytoplasm. The enzyme catalyses an N-acyl-L-alpha-aminoacyl-tRNA + H2O = an N-acyl-L-amino acid + a tRNA + H(+). Functionally, hydrolyzes ribosome-free peptidyl-tRNAs (with 1 or more amino acids incorporated), which drop off the ribosome during protein synthesis, or as a result of ribosome stalling. In terms of biological role, catalyzes the release of premature peptidyl moieties from peptidyl-tRNA molecules trapped in stalled 50S ribosomal subunits, and thus maintains levels of free tRNAs and 50S ribosomes. This chain is Peptidyl-tRNA hydrolase, found in Methylorubrum populi (strain ATCC BAA-705 / NCIMB 13946 / BJ001) (Methylobacterium populi).